The chain runs to 227 residues: 2-C-methyl-D-erythritol 4-phosphate cytidylyltransferase (227 aa).

The protein belongs to the IspD/TarI cytidylyltransferase family. IspD subfamily.

It catalyses the reaction 2-C-methyl-D-erythritol 4-phosphate + CTP + H(+) = 4-CDP-2-C-methyl-D-erythritol + diphosphate. It functions in the pathway isoprenoid biosynthesis; isopentenyl diphosphate biosynthesis via DXP pathway; isopentenyl diphosphate from 1-deoxy-D-xylulose 5-phosphate: step 2/6. Catalyzes the formation of 4-diphosphocytidyl-2-C-methyl-D-erythritol from CTP and 2-C-methyl-D-erythritol 4-phosphate (MEP). In Mycobacterium marinum (strain ATCC BAA-535 / M), this protein is 2-C-methyl-D-erythritol 4-phosphate cytidylyltransferase.